The following is a 329-amino-acid chain: Calponin-3 (329 aa).

Lys23 carries the post-translational modification N6-acetyllysine. The Calponin-homology (CH) domain maps to 26–130 (HQAEEDLRNW…TLVALAGLAK (105 aa)). Position 158 is an N6-methyllysine (Lys158). 3 Calponin-like repeats span residues 164-189 (IGLQ…RHLY), 204-229 (ISLQ…RDIY), and 243-268 (ISLQ…RQVY). Positions 280–329 (VIHNGSQGTGTNGSEISDSDYQAEYPDEYHGEYQDDYPRDYQYGDQGIDY) are disordered. The span at 306-318 (DEYHGEYQDDYPR) shows a compositional bias: basic and acidic residues.

The protein belongs to the calponin family.

Its function is as follows. Thin filament-associated protein that is implicated in the regulation and modulation of smooth muscle contraction. It is capable of binding to actin, calmodulin and tropomyosin. The interaction of calponin with actin inhibits the actomyosin Mg-ATPase activity. The protein is Calponin-3 (CNN3) of Bos taurus (Bovine).